We begin with the raw amino-acid sequence, 492 residues long: Transmembrane protein 39B (492 aa).

Positions 1–54 (MGGRRGPNRTSYCRNPLCEPGSSGGSSGSHTSSASVTSVRSRTRSSSGTGLSSP) are disordered. A glycan (N-linked (GlcNAc...) asparagine) is linked at Asn8. A compositionally biased stretch (low complexity) spans 28–53 (GSHTSSASVTSVRSRTRSSSGTGLSS). A run of 8 helical transmembrane segments spans residues 77–97 (SILFELQLFFCQLIALFVHYI), 115–135 (TSLNFHLIDFNLLMVTTIVLG), 153–175 (SLFRSILLFLTRFTVLTATGWSL), 185–205 (TYSFLNLLFLCYPFGMYIPFL), 288–308 (EVLVSSMLSAYYVAFVPVWFV), 322–342 (LFLLVSISTSVILMQHLLPAS), 421–441 (ILNILLLLEGAVIVYQLYSLM), and 447–467 (HQTISLALILFSNYYAFFKLL).

Belongs to the TMEM39 family.

The protein localises to the endoplasmic reticulum membrane. May protect the cells against DNA damage caused by exposure to the cold-warming stress and facilitates tissue damage repair during the recovery phase. This Homo sapiens (Human) protein is Transmembrane protein 39B.